The sequence spans 256 residues: 5'-nucleotidase SurE (256 aa).

A divalent metal cation-binding residues include aspartate 8, aspartate 9, serine 40, and asparagine 94.

It belongs to the SurE nucleotidase family. A divalent metal cation serves as cofactor.

The protein localises to the cytoplasm. It catalyses the reaction a ribonucleoside 5'-phosphate + H2O = a ribonucleoside + phosphate. Nucleotidase that shows phosphatase activity on nucleoside 5'-monophosphates. The protein is 5'-nucleotidase SurE of Wolbachia pipientis subsp. Culex pipiens (strain wPip).